The chain runs to 347 residues: DnaJ protein ERDJ3B (347 aa).

A signal peptide spans 1 to 23 (MAAPRWIGPLLLLLLHFVAAVAG). Residues 25–90 (SYYDVLQVPK…EKRKIYDRYG (66 aa)) enclose the J domain.

Interacts with BIP1.

The protein localises to the endoplasmic reticulum. Functionally, may play a role in protein folding in the endoplasmic reticulum. The chain is DnaJ protein ERDJ3B from Oryza sativa subsp. japonica (Rice).